Consider the following 494-residue polypeptide: Sulfate adenylyltransferase subunit 1 (494 aa).

In terms of domain architecture, tr-type G spans 28–242; it reads TRPLRLITCG…TLELATVRST (215 aa). Residues 37 to 44 are G1; it reads GSVDDGKS. Residue 37–44 participates in GTP binding; sequence GSVDDGKS. Residues 94 to 98 form a G2 region; it reads GITID. Residues 115–118 are G3; sequence DTPG. Residues 115-119 and 170-173 contribute to the GTP site; these read DTPGH and NKID. Residues 170–173 are G4; sequence NKID. Residues 207-209 form a G5 region; that stretch reads SAL.

The protein belongs to the TRAFAC class translation factor GTPase superfamily. Classic translation factor GTPase family. CysN/NodQ subfamily. As to quaternary structure, heterodimer composed of CysD, the smaller subunit, and CysN.

The catalysed reaction is sulfate + ATP + H(+) = adenosine 5'-phosphosulfate + diphosphate. It functions in the pathway sulfur metabolism; hydrogen sulfide biosynthesis; sulfite from sulfate: step 1/3. Its function is as follows. With CysD forms the ATP sulfurylase (ATPS) that catalyzes the adenylation of sulfate producing adenosine 5'-phosphosulfate (APS) and diphosphate, the first enzymatic step in sulfur assimilation pathway. APS synthesis involves the formation of a high-energy phosphoric-sulfuric acid anhydride bond driven by GTP hydrolysis by CysN coupled to ATP hydrolysis by CysD. The protein is Sulfate adenylyltransferase subunit 1 of Agrobacterium fabrum (strain C58 / ATCC 33970) (Agrobacterium tumefaciens (strain C58)).